Consider the following 789-residue polypeptide: UPF0313 protein VC_1711 (789 aa).

Residues 363–642 (AYDMIKTSVN…KALLRYHDPA (280 aa)) enclose the Radical SAM core domain. [4Fe-4S] cluster contacts are provided by Cys-377, Cys-381, and Cys-384. The disordered stretch occupies residues 669 to 789 (PEKDSDLVTP…NTQRQPQRAR (121 aa)). Residues 683-698 (KSGRHGANRFATKHTH) are compositionally biased toward basic residues. Polar residues-rich tracts occupy residues 716–726 (RPNSGNKSNQG), 733–763 (PTGS…QRGS), and 778–789 (RGNTQRQPQRAR).

This sequence belongs to the UPF0313 family. Requires [4Fe-4S] cluster as cofactor.

In Vibrio cholerae serotype O1 (strain ATCC 39315 / El Tor Inaba N16961), this protein is UPF0313 protein VC_1711.